The sequence spans 2292 residues: Protein Ycf2 (2292 aa).

ATP is bound at residue 1640–1647 (GSIGIGRS).

It belongs to the Ycf2 family.

It localises to the plastid. It is found in the chloroplast stroma. In terms of biological role, probable ATPase of unknown function. Its presence in a non-photosynthetic plant (Epifagus virginiana) and experiments in tobacco indicate that it has an essential function which is probably not related to photosynthesis. This is Protein Ycf2 from Liriodendron tulipifera (Tuliptree).